A 154-amino-acid chain; its full sequence is SsrA-binding protein (154 aa).

Positions 134–154 are disordered; that stretch reads ETLRRRDAKREVERALKEKNR.

Belongs to the SmpB family.

It localises to the cytoplasm. In terms of biological role, required for rescue of stalled ribosomes mediated by trans-translation. Binds to transfer-messenger RNA (tmRNA), required for stable association of tmRNA with ribosomes. tmRNA and SmpB together mimic tRNA shape, replacing the anticodon stem-loop with SmpB. tmRNA is encoded by the ssrA gene; the 2 termini fold to resemble tRNA(Ala) and it encodes a 'tag peptide', a short internal open reading frame. During trans-translation Ala-aminoacylated tmRNA acts like a tRNA, entering the A-site of stalled ribosomes, displacing the stalled mRNA. The ribosome then switches to translate the ORF on the tmRNA; the nascent peptide is terminated with the 'tag peptide' encoded by the tmRNA and targeted for degradation. The ribosome is freed to recommence translation, which seems to be the essential function of trans-translation. This is SsrA-binding protein from Halalkalibacterium halodurans (strain ATCC BAA-125 / DSM 18197 / FERM 7344 / JCM 9153 / C-125) (Bacillus halodurans).